Here is a 77-residue protein sequence, read N- to C-terminus: Conotoxin Bt6.6 (77 aa).

Positions 1–19 (MEKLTILLLVAAVLMSTQA) are cleaved as a signal peptide. A propeptide spanning residues 20-38 (LIQSDGEKRQQAKINFLSX) is cleaved from the precursor. 3 cysteine pairs are disulfide-bonded: C51–C65, C58–C69, and C64–C74.

The protein belongs to the conotoxin O2 superfamily. In terms of tissue distribution, expressed by the venom duct.

The protein resides in the secreted. This is Conotoxin Bt6.6 from Conus betulinus (Beech cone).